We begin with the raw amino-acid sequence, 377 residues long: CaM kinase-like vesicle-associated protein (377 aa).

One can recognise a Protein kinase domain in the interval 24–287; that stretch reads YDLGQLIKTE…AADAISHEWI (264 aa). The disordered stretch occupies residues 324–377; the sequence is MKRLRAPEQTDPGTPSPSKDSDKTPSMATPAPSPANTPAEGAPSLPCPSPDTTG. Residues 347 to 362 are compositionally biased toward low complexity; it reads TPSMATPAPSPANTPA. The span at 368–377 shows a compositional bias: pro residues; the sequence is LPCPSPDTTG.

This sequence belongs to the protein kinase superfamily. CAMK Ser/Thr protein kinase family. As to quaternary structure, interacts with calmodulin, in the presence of calcium. Ca(2+) is required as a cofactor.

Its subcellular location is the cytoplasmic vesicle membrane. Does not appear to have detectable kinase activity. The polypeptide is CaM kinase-like vesicle-associated protein (camkv) (Xenopus laevis (African clawed frog)).